The chain runs to 302 residues: Glycine N-acyltransferase-like protein 1 (302 aa).

Belongs to the glycine N-acyltransferase family. In terms of tissue distribution, expressed in liver and kidney and, at lower levels, in pancreas, testis, ovary and stomach.

It carries out the reaction an acyl-CoA + L-glutamine = an N(2)-acyl-L-glutamine + CoA + H(+). Functionally, acyltransferase which transfers an acyl group to the N-terminus of glutamine. Can use phenylacetyl-CoA as an acyl donor. This is Glycine N-acyltransferase-like protein 1 from Homo sapiens (Human).